Reading from the N-terminus, the 134-residue chain is Large ribosomal subunit protein eL27 (134 aa).

In terms of domain architecture, KOW spans 5–40; it reads LKSGKVVVVLSGRFAGKKAVIVRNFDDGTSSRPYGH.

The protein belongs to the eukaryotic ribosomal protein eL27 family.

The chain is Large ribosomal subunit protein eL27 (RPL27) from Pyrobotrys stellatus (Green alga).